The following is a 131-amino-acid chain: Auxin-responsive protein SAUR77 (131 aa).

Belongs to the ARG7 family.

In terms of biological role, may be involved in the regulation of ethylene receptor signaling. Promotes cell expansion and plant growth. The chain is Auxin-responsive protein SAUR77 from Arabidopsis thaliana (Mouse-ear cress).